The chain runs to 1187 residues: Phospholipid-transporting ATPase IH (1187 aa).

At 1 to 61 the chain is on the cytoplasmic side; it reads MDCSLLRTLV…SSKYTFWNFI (61 aa). Residues 62–82 traverse the membrane as a helical segment; it reads PKNLFEQFRRIANFYFLIIFL. Residues 83-88 lie on the Extracellular side of the membrane; the sequence is VQLIID. Residues 89-110 form a helical membrane-spanning segment; the sequence is TPTSPVTSGLPLFFVITVTAIK. Residues 111-296 are Cytoplasmic-facing; the sequence is QGYEDWLRHK…SAVEKSMNTF (186 aa). The helical transmembrane segment at 297–318 threads the bilayer; that stretch reads LIVYLCILVSKALINTVLKYVW. Residues 319 to 349 are Extracellular-facing; it reads QSEPFRDEPWYNEKTESERQRNLFLRAFTDF. A helical transmembrane segment spans residues 350–372; the sequence is LAFMVLFNYIIPVSMYVTVEMQK. Residues 373 to 884 are Cytoplasmic-facing; sequence FLGSYFITWD…GHFYYIRISE (512 aa). Asp414 serves as the catalytic 4-aspartylphosphate intermediate. Asp414, Lys415, Thr416, Glu513, Phe555, Lys578, Arg609, Thr689, Gly690, and Asp691 together coordinate ATP. Position 414 (Asp414) interacts with Mg(2+). Thr416 lines the Mg(2+) pocket. Ser740 is modified (phosphoserine). 2 residues coordinate ATP: Arg801 and Lys807. Residue Asp828 coordinates Mg(2+). ATP-binding residues include Asn831 and Asp832. Position 832 (Asp832) interacts with Mg(2+). Residues 885–905 traverse the membrane as a helical segment; sequence LVQYFFYKNVCFIFPQFLYQF. Topologically, residues 906–917 are extracellular; the sequence is FCGFSQQTLYDT. Residues 918–937 traverse the membrane as a helical segment; the sequence is AYLTLYNISFTSLPILLYSL. Residues 938–967 are Cytoplasmic-facing; that stretch reads MEQHVGIDVLKRDPTLYRDIAKNALLRWRV. The helical transmembrane segment at 968–989 threads the bilayer; that stretch reads FIYWTFLGVFDALVFFFGAYFI. Residues 990-1003 lie on the Extracellular side of the membrane; it reads FENTTVTINGQMFG. Residues 1004-1026 traverse the membrane as a helical segment; that stretch reads NWTFGTLVFTVMVLTVTLKLALD. At 1027–1032 the chain is on the cytoplasmic side; it reads THYWTW. The chain crosses the membrane as a helical span at residues 1033–1053; that stretch reads INHFVIWGSLLFYIAFSLLWG. The Extracellular portion of the chain corresponds to 1054–1071; the sequence is GVIWPFLSYQRMYYVFIS. Residues 1072–1096 form a helical membrane-spanning segment; the sequence is MLSSGPAWLGIILLVTVGLLPDVLK. Over 1097-1138 the chain is Cytoplasmic; sequence KVLCRQLWPTATERTQNIQHQDSISEFTPLASLPSWGAQGSR. Phosphoserine is present on residues Ser1148 and Ser1158.

Belongs to the cation transport ATPase (P-type) (TC 3.A.3) family. Type IV subfamily. As to quaternary structure, component of a P4-ATPase flippase complex which consists of a catalytic alpha subunit ATP11A and an accessory beta subunit TMEM30A. The cofactor is Mg(2+). Proteolytically cleaved by CASP3. As to expression, widely expressed. Expressed in myoblasts. Expressed in retina, brain, liver, testes and kidney (at protein level). Expressed in the inner ear.

It is found in the cell membrane. The protein localises to the early endosome. It localises to the recycling endosome. The protein resides in the endoplasmic reticulum membrane. It carries out the reaction ATP + H2O + phospholipidSide 1 = ADP + phosphate + phospholipidSide 2.. It catalyses the reaction a 1,2-diacyl-sn-glycero-3-phospho-L-serine(out) + ATP + H2O = a 1,2-diacyl-sn-glycero-3-phospho-L-serine(in) + ADP + phosphate + H(+). The enzyme catalyses a 1,2-diacyl-sn-glycero-3-phosphoethanolamine(out) + ATP + H2O = a 1,2-diacyl-sn-glycero-3-phosphoethanolamine(in) + ADP + phosphate + H(+). Functionally, catalytic component of a P4-ATPase flippase complex which catalyzes the hydrolysis of ATP coupled to the transport of aminophospholipids, phosphatidylserines (PS) and phosphatidylethanolamines (PE), from the outer to the inner leaflet of the plasma membrane. Does not show flippase activity toward phosphatidylcholine (PC). Contributes to the maintenance of membrane lipid asymmetry with a specific role in morphogenesis of muscle cells. In myoblasts, mediates PS enrichment at the inner leaflet of plasma membrane, triggering PIEZO1-dependent Ca2+ influx and Rho GTPases signal transduction, subsequently leading to the assembly of cortical actomyosin fibers and myotube formation. The sequence is that of Phospholipid-transporting ATPase IH (Atp11a) from Mus musculus (Mouse).